Consider the following 146-residue polypeptide: Hemoglobin subunit beta (146 aa).

A Globin domain is found at 2–146 (EWTQQERSII…VVFALGRKYH (145 aa)). Heme b is bound by residues H63 and H92.

Belongs to the globin family. Heterotetramer of two alpha chains and two beta chains. As to expression, red blood cells.

In terms of biological role, involved in oxygen transport from gills to the various peripheral tissues. This chain is Hemoglobin subunit beta (hbb), found in Thunnus thynnus (Atlantic bluefin tuna).